The following is a 103-amino-acid chain: Matrix Gla protein (103 aa).

An N-terminal signal peptide occupies residues 1–19; sequence MKSLVLLAILAALAVVTLC. At Glu21 the chain carries 4-carboxyglutamate. 3 positions are modified to phosphoserine: Ser22, Ser25, and Ser28. The region spanning 51–97 is the Gla domain; sequence RAKVQERIRERSKPVHELNREACDDYRLCERYAMVYGYNAAYNRYFR. 4 positions are modified to 4-carboxyglutamate: Glu56, Glu60, Glu67, and Glu71. Cys73 and Cys79 are joined by a disulfide. Positions 97–103 are cleaved as a propeptide — removed in mature form; probably by carboxypeptidase N; the sequence is RERRGAK.

Belongs to the osteocalcin/matrix Gla protein family. Requires vitamin K-dependent gamma-carboxylation for its function.

The protein resides in the secreted. In terms of biological role, associates with the organic matrix of bone and cartilage. Thought to act as an inhibitor of bone formation. The polypeptide is Matrix Gla protein (MGP) (Pongo abelii (Sumatran orangutan)).